The following is a 211-amino-acid chain: Protein-L-isoaspartate O-methyltransferase (211 aa).

The active site involves serine 60.

Belongs to the methyltransferase superfamily. L-isoaspartyl/D-aspartyl protein methyltransferase family.

It is found in the cytoplasm. It catalyses the reaction [protein]-L-isoaspartate + S-adenosyl-L-methionine = [protein]-L-isoaspartate alpha-methyl ester + S-adenosyl-L-homocysteine. Functionally, catalyzes the methyl esterification of L-isoaspartyl residues in peptides and proteins that result from spontaneous decomposition of normal L-aspartyl and L-asparaginyl residues. It plays a role in the repair and/or degradation of damaged proteins. The sequence is that of Protein-L-isoaspartate O-methyltransferase from Pseudomonas fluorescens (strain ATCC BAA-477 / NRRL B-23932 / Pf-5).